Consider the following 207-residue polypeptide: Guanylate kinase (207 aa).

Residues 4–184 form the Guanylate kinase-like domain; the sequence is GTLYIVSAPS…ALMDFKAIIR (181 aa). 11 to 18 lines the ATP pocket; the sequence is APSGAGKS.

Belongs to the guanylate kinase family.

It localises to the cytoplasm. The catalysed reaction is GMP + ATP = GDP + ADP. In terms of biological role, essential for recycling GMP and indirectly, cGMP. This is Guanylate kinase from Vibrio vulnificus (strain CMCP6).